The following is a 359-amino-acid chain: Small ribosomal subunit protein uS2 (359 aa).

Residues glutamate 232 to threonine 295 form a disordered region. 2 stretches are compositionally biased toward basic and acidic residues: residues glutamate 239–asparagine 250 and aspartate 257–tyrosine 273.

Belongs to the universal ribosomal protein uS2 family.

The polypeptide is Small ribosomal subunit protein uS2 (rpsB) (Spiroplasma citri).